The chain runs to 122 residues: Basic phospholipase A2 LmTX-II (122 aa).

Cystine bridges form between Cys26/Cys115, Cys28/Cys44, Cys43/Cys95, Cys49/Cys122, Cys50/Cys88, and Cys75/Cys86. 3 residues coordinate Ca(2+): Tyr27, Gly29, and Gly31. The active site involves His47. Asp48 serves as a coordination point for Ca(2+). Asp89 is a catalytic residue.

As to quaternary structure, monomer. It depends on Ca(2+) as a cofactor. Expressed by the venom gland.

The protein localises to the secreted. The enzyme catalyses a 1,2-diacyl-sn-glycero-3-phosphocholine + H2O = a 1-acyl-sn-glycero-3-phosphocholine + a fatty acid + H(+). Functionally, snake venom phospholipase A2 (PLA2) that may display neurotoxic and myotoxic activities. May induce inflammatory edema by mechanisms involving mast cell activation and arachidonic acid metabolites. May increase plasma creatine kinase activity. PLA2 catalyzes the calcium-dependent hydrolysis of the 2-acyl groups in 3-sn-phosphoglycerides. The polypeptide is Basic phospholipase A2 LmTX-II (Lachesis muta muta (Bushmaster)).